The chain runs to 129 residues: Small ribosomal subunit protein uS11 (129 aa).

It belongs to the universal ribosomal protein uS11 family. As to quaternary structure, part of the 30S ribosomal subunit. Interacts with proteins S7 and S18. Binds to IF-3.

Located on the platform of the 30S subunit, it bridges several disparate RNA helices of the 16S rRNA. Forms part of the Shine-Dalgarno cleft in the 70S ribosome. In Levilactobacillus brevis (strain ATCC 367 / BCRC 12310 / CIP 105137 / JCM 1170 / LMG 11437 / NCIMB 947 / NCTC 947) (Lactobacillus brevis), this protein is Small ribosomal subunit protein uS11.